Reading from the N-terminus, the 293-residue chain is NAD kinase (293 aa).

The Proton acceptor role is filled by Asp74. NAD(+) contacts are provided by residues 74-75, Arg79, 148-149, Arg176, Asp178, 189-194, and Gln248; these read DG, NE, and TAYALS.

Belongs to the NAD kinase family. Requires a divalent metal cation as cofactor.

The protein resides in the cytoplasm. The enzyme catalyses NAD(+) + ATP = ADP + NADP(+) + H(+). In terms of biological role, involved in the regulation of the intracellular balance of NAD and NADP, and is a key enzyme in the biosynthesis of NADP. Catalyzes specifically the phosphorylation on 2'-hydroxyl of the adenosine moiety of NAD to yield NADP. In Blochmanniella floridana, this protein is NAD kinase.